The sequence spans 72 residues: Translation initiation factor IF-1 (72 aa).

The region spanning 2-72 (AKDDVIEVDG…TRGRITYRFK (71 aa)) is the S1-like domain.

This sequence belongs to the IF-1 family. Component of the 30S ribosomal translation pre-initiation complex which assembles on the 30S ribosome in the order IF-2 and IF-3, IF-1 and N-formylmethionyl-tRNA(fMet); mRNA recruitment can occur at any time during PIC assembly.

The protein localises to the cytoplasm. Its function is as follows. One of the essential components for the initiation of protein synthesis. Stabilizes the binding of IF-2 and IF-3 on the 30S subunit to which N-formylmethionyl-tRNA(fMet) subsequently binds. Helps modulate mRNA selection, yielding the 30S pre-initiation complex (PIC). Upon addition of the 50S ribosomal subunit IF-1, IF-2 and IF-3 are released leaving the mature 70S translation initiation complex. This is Translation initiation factor IF-1 from Lactococcus lactis subsp. lactis (strain IL1403) (Streptococcus lactis).